The sequence spans 205 residues: Putative 3-methyladenine DNA glycosylase (205 aa).

This sequence belongs to the DNA glycosylase MPG family.

This Clostridium perfringens (strain SM101 / Type A) protein is Putative 3-methyladenine DNA glycosylase.